A 542-amino-acid polypeptide reads, in one-letter code: CTP synthase (542 aa).

The interval 1–265 is amidoligase domain; the sequence is MTRYIFVTGG…DDIVVERFGL (265 aa). Ser13 lines the CTP pocket. Residue Ser13 participates in UTP binding. ATP-binding positions include 14-19 and Asp71; that span reads SLGKGI. Mg(2+) contacts are provided by Asp71 and Glu139. Residues 146–148, 186–191, and Lys222 each bind CTP; these read DIE and KTKPTQ. Residues 186–191 and Lys222 contribute to the UTP site; that span reads KTKPTQ. Residues 290 to 541 enclose the Glutamine amidotransferase type-1 domain; it reads TIAMVGKYME…VNAALKYSGK (252 aa). Position 351 (Gly351) interacts with L-glutamine. Cys378 serves as the catalytic Nucleophile; for glutamine hydrolysis. Residues 379-382, Glu402, and Arg469 each bind L-glutamine; that span reads LGMQ. Active-site residues include His514 and Glu516.

This sequence belongs to the CTP synthase family. As to quaternary structure, homotetramer.

It catalyses the reaction UTP + L-glutamine + ATP + H2O = CTP + L-glutamate + ADP + phosphate + 2 H(+). The enzyme catalyses L-glutamine + H2O = L-glutamate + NH4(+). It carries out the reaction UTP + NH4(+) + ATP = CTP + ADP + phosphate + 2 H(+). The protein operates within pyrimidine metabolism; CTP biosynthesis via de novo pathway; CTP from UDP: step 2/2. With respect to regulation, allosterically activated by GTP, when glutamine is the substrate; GTP has no effect on the reaction when ammonia is the substrate. The allosteric effector GTP functions by stabilizing the protein conformation that binds the tetrahedral intermediate(s) formed during glutamine hydrolysis. Inhibited by the product CTP, via allosteric rather than competitive inhibition. Functionally, catalyzes the ATP-dependent amination of UTP to CTP with either L-glutamine or ammonia as the source of nitrogen. Regulates intracellular CTP levels through interactions with the four ribonucleotide triphosphates. The chain is CTP synthase from Pseudomonas aeruginosa (strain LESB58).